The following is a 186-amino-acid chain: Lumazine protein (186 aa).

Lumazine-binding repeat units follow at residues 1–96 (MFRG…VGRG) and 97–186 (GLTG…LNEW).

Requires 6,7-dimethyl-8-(1-D-ribityl)lumazine as cofactor.

Antenna protein that modulates the color of the bioluminescence emission of the luciferase. In the presence of LumP, luciferase emission is shifted to higher energy values (shorter wavelength). The chain is Lumazine protein (lumP) from Photobacterium leiognathi.